Consider the following 358-residue polypeptide: Sulfoquinovosyl glycerol transport ATP-binding protein SmoE (358 aa).

The 231-residue stretch at Val4 to Val234 folds into the ABC transporter domain. Residue Gly36 to Ser43 participates in ATP binding.

The protein belongs to the ABC transporter superfamily. In terms of assembly, the complex is probably composed of two ATP-binding proteins (SmoE), two transmembrane proteins (SmoG and SmoH) and a solute-binding protein (SmoF).

Its subcellular location is the cell inner membrane. Functionally, part of the ABC transporter complex SmoEFGH involved in sulfoquinovosyl glycerol (SQGro) uptake. Responsible for energy coupling to the transport system. The polypeptide is Sulfoquinovosyl glycerol transport ATP-binding protein SmoE (Agrobacterium fabrum (strain C58 / ATCC 33970) (Agrobacterium tumefaciens (strain C58))).